The primary structure comprises 818 residues: FAD-dependent monooxygenase anuJ (818 aa).

FAD is bound by residues E46, A60, R122, D329, and G342. A run of 3 helical transmembrane segments spans residues 471-491 (VLWA…MFSV), 539-559 (FFYQ…IMLV), and 571-591 (LSFA…FVPI). N614 carries N-linked (GlcNAc...) asparagine glycosylation. 2 consecutive transmembrane segments (helical) span residues 621–641 (ILPV…LSPV) and 647–667 (AAGF…AGLA). A glycan (N-linked (GlcNAc...) asparagine) is linked at N683. Transmembrane regions (helical) follow at residues 743–763 (WDQV…FADL) and 778–798 (FSAL…LMWL).

The protein belongs to the paxM FAD-dependent monooxygenase family.

It localises to the membrane. Its function is as follows. Highly reducing polyketide synthase; part of the gene cluster that mediates the biosynthesis of annullatin D, an alkylated aromatic polyketide with a fused dihydrobenzofuran lactone ring system that exhibits potent agonistic activities toward the cannabinoid receptors. AnuJ does not seem to play a role within the pathway. The annullatin backbone 2-hydroxymethyl-3-pentylphenol is assembled from one acetyl-CoA starter unit and 5 malonyl-CoA elongation units by cooperation of the highly reducing polyketide synthase anuA, the short-chain dehydrogenase anuB and the oxidoreductase anuC, before being hydroxylated at the C-5 alkyl chain by the cytochrome P450 monooxygenase anuE to form (8S)-annullatin E. The prenyltransferase anuH subsequently installs one isoprenyl group at the benzene ring to form (8S)-annullatin J. Enzymatic or nonenzymatic dihydro-benzofuran ring formation between the prenyl and the phenolic hydroxyl groups in (8S)-annullatin J results in two diastereomers (2S,9S)-annullatin H and compound 12. The intermediate (2S,9S)-annullatin H is then converted to (2S,9S)-annullatin D by the FAD-linked oxidoreductase anuG-catalyzed five-member lactone ring formation. The isomer 12 acts as a substrate for the short-chain dehydrogenase anuF and is oxidized to (2R)-annullatin F, which is subsequently acetylated by an acetyltransferase leading to (2R)-annullatin G formation. The remaining enzymes identified within the cluster, anuD, anuI and anuJ, seem not to be involved in annullatin biosynthesis. This is FAD-dependent monooxygenase anuJ from Penicillium roqueforti (strain FM164).